The chain runs to 483 residues: Probable ATP-dependent RNA helicase DDX49 (483 aa).

The short motif at 2–30 is the Q motif element; it reads AGFAELGLSSWLVEQCRQLGLKQPTPVQL. Residues 33–207 form the Helicase ATP-binding domain; sequence IPAILEGRDC…GLATNQPFFW (175 aa). 46 to 53 serves as a coordination point for ATP; sequence AKTGSGKT. The short motif at 152–155 is the DEAD box element; it reads DEAD. The 165-residue stretch at 218–382 folds into the Helicase C-terminal domain; that stretch reads QLDQRYLLVP…EFSVEEAEVL (165 aa). Residues 444-483 are disordered; that stretch reads KEKVEETLKRQKAGRAGHKGRPPRTPSGSHSGPVPSQGLV. A compositionally biased stretch (basic residues) spans 453–465; it reads RQKAGRAGHKGRP.

It belongs to the DEAD box helicase family. DDX49/DBP8 subfamily.

The protein localises to the nucleus. It is found in the nucleolus. It catalyses the reaction ATP + H2O = ADP + phosphate + H(+). In terms of biological role, ATP-dependent RNA helicase that plays a role in various aspects of RNA metabolism including the regulation of mRNA export and the levels of pre-ribosomal RNA. Regulates the stability and synthesis of pre-ribosomal RNA and thereby regulates cell proliferation. Also possesses antiviral activity by recognizing gammaherpesvirus transcripts in the context of lytic reactivation. The polypeptide is Probable ATP-dependent RNA helicase DDX49 (DDX49) (Homo sapiens (Human)).